A 469-amino-acid polypeptide reads, in one-letter code: ATP-dependent protease ATPase subunit HslU (469 aa).

ATP is bound by residues Ile-24 and 66-71; that span reads GVGKTE. A disordered region spans residues 159-179; sequence LFGSMNQPDEPAEEEVDQELK. Positions 282, 347, and 419 each coordinate ATP.

Belongs to the ClpX chaperone family. HslU subfamily. A double ring-shaped homohexamer of HslV is capped on each side by a ring-shaped HslU homohexamer. The assembly of the HslU/HslV complex is dependent on binding of ATP.

It is found in the cytoplasm. ATPase subunit of a proteasome-like degradation complex; this subunit has chaperone activity. The binding of ATP and its subsequent hydrolysis by HslU are essential for unfolding of protein substrates subsequently hydrolyzed by HslV. HslU recognizes the N-terminal part of its protein substrates and unfolds these before they are guided to HslV for hydrolysis. The protein is ATP-dependent protease ATPase subunit HslU of Listeria innocua serovar 6a (strain ATCC BAA-680 / CLIP 11262).